Reading from the N-terminus, the 431-residue chain is Serine--tRNA ligase (431 aa).

238-240 contributes to the L-serine binding site; that stretch reads TSE. 269–271 contributes to the ATP binding site; sequence RSE. Glutamate 292 lines the L-serine pocket. 356 to 359 provides a ligand contact to ATP; sequence EISS. Serine 391 is an L-serine binding site.

Belongs to the class-II aminoacyl-tRNA synthetase family. Type-1 seryl-tRNA synthetase subfamily. In terms of assembly, homodimer. The tRNA molecule binds across the dimer.

Its subcellular location is the cytoplasm. It catalyses the reaction tRNA(Ser) + L-serine + ATP = L-seryl-tRNA(Ser) + AMP + diphosphate + H(+). It carries out the reaction tRNA(Sec) + L-serine + ATP = L-seryl-tRNA(Sec) + AMP + diphosphate + H(+). It functions in the pathway aminoacyl-tRNA biosynthesis; selenocysteinyl-tRNA(Sec) biosynthesis; L-seryl-tRNA(Sec) from L-serine and tRNA(Sec): step 1/1. Catalyzes the attachment of serine to tRNA(Ser). Is also able to aminoacylate tRNA(Sec) with serine, to form the misacylated tRNA L-seryl-tRNA(Sec), which will be further converted into selenocysteinyl-tRNA(Sec). The sequence is that of Serine--tRNA ligase from Leptothrix cholodnii (strain ATCC 51168 / LMG 8142 / SP-6) (Leptothrix discophora (strain SP-6)).